We begin with the raw amino-acid sequence, 264 residues long: Electron transfer flavoprotein subunit beta (264 aa).

AMP-binding positions include Ala-6, 36–39 (NEWD), Val-64, 119–122 (GVQS), and 127–130 (YAST).

Heterodimer of an alpha and a beta subunit. Forms a ternary complex with trimethylamine dehydrogenase.

Functionally, heterodimeric electron transfer flavoprotein that accepts electrons from trimethylamine dehydrogenase. It transfers the electrons to the main respiratory chain via ETF-ubiquinone oxidoreductase (ETF dehydrogenase). EtfB binds an AMP molecule that probably has a purely structural role. This chain is Electron transfer flavoprotein subunit beta (etfB), found in Methylophilus methylotrophus (Bacterium W3A1).